An 863-amino-acid polypeptide reads, in one-letter code: FO synthase (863 aa).

2 consecutive Radical SAM core domains span residues 91 to 343 (ITYS…APPN) and 551 to 792 (VTFV…SHIQ). The segment at 92–424 (TYSRKVFIPV…PRVRGHVVAL (333 aa)) is cofG-like. C105, C109, C112, C565, C569, and C572 together coordinate [4Fe-4S] cluster. The segment at 528 to 861 (DGPALEAVTA…RQRTTTYALR (334 aa)) is cofH-like.

In the N-terminal section; belongs to the radical SAM superfamily. CofG family. The protein in the C-terminal section; belongs to the radical SAM superfamily. CofH family. It depends on [4Fe-4S] cluster as a cofactor.

It carries out the reaction 5-amino-6-(D-ribitylamino)uracil + L-tyrosine + S-adenosyl-L-methionine = 5-amino-5-(4-hydroxybenzyl)-6-(D-ribitylimino)-5,6-dihydrouracil + 2-iminoacetate + 5'-deoxyadenosine + L-methionine + H(+). The enzyme catalyses 5-amino-5-(4-hydroxybenzyl)-6-(D-ribitylimino)-5,6-dihydrouracil + S-adenosyl-L-methionine = 7,8-didemethyl-8-hydroxy-5-deazariboflavin + 5'-deoxyadenosine + L-methionine + NH4(+) + H(+). It functions in the pathway cofactor biosynthesis; coenzyme F0 biosynthesis. Its function is as follows. Catalyzes the radical-mediated synthesis of 7,8-didemethyl-8-hydroxy-5-deazariboflavin (FO) from 5-amino-6-(D-ribitylamino)uracil and L-tyrosine. The chain is FO synthase (fbiC) from Mycobacterium leprae (strain TN).